The chain runs to 509 residues: DNA primase large subunit (509 aa).

The tract at residues 253 to 270 (LSHSYTGQDYSTQGNVGK) is interdomain linker. Residues 266 to 509 (GNVGKISLDQ…GLEDYFSEDS (244 aa)) are interacts with PRIM1. Positions 287, 367, 384, and 424 each coordinate [4Fe-4S] cluster. Positions 300–442 (HLRHGGRMQY…NVDDCGFSLN (143 aa)) are RNA:DNA duplex-binding. A disordered region spans residues 461–486 (IKKEPIQPETPQPKPSVQKTKDASSA). Phosphothreonine is present on threonine 470.

It belongs to the eukaryotic-type primase large subunit family. As to quaternary structure, heterodimer of a catalytic subunit PRIM1 and a regulatory subunit PRIM2, also known as the DNA primase complex. Interacts via (C-terminus) with PRIM1. Component of the alpha DNA polymerase complex (also known as the alpha DNA polymerase-primase complex) consisting of four subunits: the catalytic subunit POLA1, the regulatory subunit POLA2, and the primase complex subunits PRIM1 and PRIM2 respectively. Within the complex, POLA1 directly interacts with PRIM2. It depends on [4Fe-4S] cluster as a cofactor.

Its function is as follows. Regulatory subunit of the DNA primase complex and component of the DNA polymerase alpha complex (also known as the alpha DNA polymerase-primase complex) which play an essential role in the initiation of DNA synthesis. During the S phase of the cell cycle, the DNA polymerase alpha complex (composed of a catalytic subunit POLA1, an accessory subunit POLA2 and two primase subunits, the catalytic subunit PRIM1 and the regulatory subunit PRIM2) is recruited to DNA at the replicative forks via direct interactions with MCM10 and WDHD1. The primase subunit of the polymerase alpha complex initiates DNA synthesis by oligomerising short RNA primers on both leading and lagging strands. These primers are initially extended by the polymerase alpha catalytic subunit and subsequently transferred to polymerase delta and polymerase epsilon for processive synthesis on the lagging and leading strand, respectively. In the primase complex, both subunits are necessary for the initial di-nucleotide formation, but the extension of the primer depends only on the catalytic subunit. Binds RNA:DNA duplex and coordinates the catalytic activities of PRIM1 and POLA2 during primase-to-polymerase switch. This is DNA primase large subunit (PRIM2) from Homo sapiens (Human).